The sequence spans 160 residues: Cyclic pyranopterin monophosphate synthase (160 aa).

Residues Leu-76–His-78 and Met-114–Glu-115 each bind substrate. The active site involves Asp-129.

Belongs to the MoaC family. As to quaternary structure, homohexamer; trimer of dimers.

The enzyme catalyses (8S)-3',8-cyclo-7,8-dihydroguanosine 5'-triphosphate = cyclic pyranopterin phosphate + diphosphate. It participates in cofactor biosynthesis; molybdopterin biosynthesis. Catalyzes the conversion of (8S)-3',8-cyclo-7,8-dihydroguanosine 5'-triphosphate to cyclic pyranopterin monophosphate (cPMP). In Saccharophagus degradans (strain 2-40 / ATCC 43961 / DSM 17024), this protein is Cyclic pyranopterin monophosphate synthase.